The primary structure comprises 189 residues: Putative zinc finger protein ORF189 (189 aa).

The C2H2-type zinc-finger motif lies at 114 to 137 (YVCPYCVSRFPTVRALKIHLKRRH).

The protein is Putative zinc finger protein ORF189 of Acidianus two-tailed virus (ATV).